Here is a 203-residue protein sequence, read N- to C-terminus: ESCRT-related protein CHMP1B (203 aa).

Coiled coils occupy residues 13 to 51 (DLKF…MDGA) and 109 to 140 (GNLQ…NAMA). The interval 172 to 203 (PQPAGHAIPTKTEEKVDEDDLSRRLAELKARG) is disordered. Basic and acidic residues predominate over residues 192-203 (LSRRLAELKARG).

This sequence belongs to the SNF7 family. As to quaternary structure, interacts with CHMP1A and LIP5. Interacts with VPS2.2.

It localises to the cytoplasm. Its subcellular location is the endosome membrane. Functionally, involved in ESCRT-dependent multivesicular body (MVB) formation and sorting of endosomal cargo proteins into MVBs. Mediates the MVB sorting of the auxin carriers PIN1, PIN2 and AUX1. Required for embryonic axis establishment and seedling growth. Required for autophagic degradation of plastid proteins. Promotes the efficient sequestration of cargo from plastids into autophagosomes. Mediates the efficient delivery of autophagic plastid bodies to the vacuole, but not into the cytoplasm. This chain is ESCRT-related protein CHMP1B, found in Arabidopsis thaliana (Mouse-ear cress).